An 877-amino-acid chain; its full sequence is Oligopeptide transporter 2 (877 aa).

Over 1–167 (MSETVKDKVI…DPTIPVETFR (167 aa)) the chain is Cytoplasmic. The chain crosses the membrane as a helical span at residues 168–188 (AYFLAIIWSVIGSGFNEFFSH). R189 is a topological domain (extracellular). Residues 190-210 (VVSISLNTPIIQMFLYICGKA) form a helical membrane-spanning segment. At 211-240 (WAKTIPCWTITIRGRKYGINIDKPWTQKEQ) the chain is on the cytoplasmic side. The helical transmembrane segment at 241-261 (MFSTLLYAICQGAFYTHYNIL) threads the bilayer. Residues 262 to 272 (TQKLFYHSAFS) lie on the Extracellular side of the membrane. The helical transmembrane segment at 273–293 (FGYQFLLSLSVQFIGFGFAGI) threads the bilayer. Topologically, residues 294–334 (LRKFVVYPARALWPTVMPTIAINKALLGKEKHESGMSRYKF) are cytoplasmic. The helical transmembrane segment at 335 to 355 (FFLTFFIMFIYNWFPTYIINI) threads the bilayer. Topologically, residues 356-374 (LNTFNWMTWIKPSNINLAN) are extracellular. N374 carries an N-linked (GlcNAc...) asparagine glycan. A helical membrane pass occupies residues 375 to 395 (ITGGVTGLGINPISSFDWNVI). Residues 396 to 404 (SFNSPLVYP) lie on the Cytoplasmic side of the membrane. A helical membrane pass occupies residues 405-425 (FWSYLTQYLGCILAALIVIAV). Residues 426–480 (YYSNYMSCQYLPIFTNSLYTNTGHSFKVTEVLDSDNKLDVKKYQSYSPPYYSAGN) are Extracellular-facing. A helical membrane pass occupies residues 481-501 (LVSYGAFICAYPLMITWSFIV). Residues 502–553 (HSKLLFNAFKDWALNLWAMRKLKSWVTMFKSDYRALDDYDDPHSNAMKNYKE) are Cytoplasmic-facing. A helical transmembrane segment spans residues 554-574 (VPDWWYFAILIGSLVVGIAVV). Over 575–582 (EHYPTNTP) the chain is Extracellular. Residues 583–603 (VWGLFVCLGFNFVFLIPTTIL) traverse the membrane as a helical segment. At 604-614 (QATTGYSFGLN) the chain is on the cytoplasmic side. The chain crosses the membrane as a helical span at residues 615–635 (LLIEMVMGYALPGNPIAIMIL). Residues 636 to 671 (KAFGYNIDGQADNYVSNLKIAHYCKIPPMALFRGQC) are Extracellular-facing. A helical membrane pass occupies residues 672–692 (VIVFIQIFVNLGVLNWQISNI). The Cytoplasmic portion of the chain corresponds to 693–730 (KDFCTPHQNAKFTCPDAVTYYNASVVWGAIGPKRIFNY). The chain crosses the membrane as a helical span at residues 731-751 (IYPIFKWCWLIGACIGIFFGV). The Extracellular segment spans residues 752 to 766 (WKRWGKFYPRYFDPM). Residues 767–789 (LFVGGMLNMSPPYNLMYYTSGMI) form a helical membrane-spanning segment. Residues 790 to 811 (VSYISQYYMKRHHLNLWEKYNY) lie on the Cytoplasmic side of the membrane. The chain crosses the membrane as a helical span at residues 812 to 832 (VLSAGFSTGLVLSAIIIFFAV). Residues 833–877 (QYKDTAFNWWGNTVPYAGADGVGYPLKNITDTANGYFGYAPGHYP) are Extracellular-facing. Residue N860 is glycosylated (N-linked (GlcNAc...) asparagine).

It belongs to the oligopeptide OPT transporter family.

The protein localises to the membrane. Its function is as follows. Transports tetra- and pentapeptides. Does not transport glutathione. This Saccharomyces cerevisiae (strain ATCC 204508 / S288c) (Baker's yeast) protein is Oligopeptide transporter 2 (OPT2).